The following is a 320-amino-acid chain: Malate dehydrogenase (320 aa).

NAD(+) is bound by residues 10–15 (GAGMIG) and aspartate 34. 2 residues coordinate substrate: arginine 83 and arginine 89. NAD(+)-binding positions include asparagine 96 and 119–121 (ITN). Positions 121 and 152 each coordinate substrate. The Proton acceptor role is filled by histidine 176.

It belongs to the LDH/MDH superfamily. MDH type 3 family.

The catalysed reaction is (S)-malate + NAD(+) = oxaloacetate + NADH + H(+). In terms of biological role, catalyzes the reversible oxidation of malate to oxaloacetate. This chain is Malate dehydrogenase, found in Caulobacter sp. (strain K31).